Here is a 490-residue protein sequence, read N- to C-terminus: Cobyric acid synthase (490 aa).

In terms of domain architecture, GATase cobBQ-type spans 250–432 (QLEIVVIRLP…LHGLLDNHAW (183 aa)). Catalysis depends on Cys328, which acts as the Nucleophile. His424 is an active-site residue.

This sequence belongs to the CobB/CobQ family. CobQ subfamily.

It functions in the pathway cofactor biosynthesis; adenosylcobalamin biosynthesis. Its function is as follows. Catalyzes amidations at positions B, D, E, and G on adenosylcobyrinic A,C-diamide. NH(2) groups are provided by glutamine, and one molecule of ATP is hydrogenolyzed for each amidation. In Gloeobacter violaceus (strain ATCC 29082 / PCC 7421), this protein is Cobyric acid synthase.